Consider the following 483-residue polypeptide: Glutamyl-tRNA(Gln) amidotransferase subunit A (483 aa).

Catalysis depends on charge relay system residues Lys-75 and Ser-150. The active-site Acyl-ester intermediate is the Ser-174.

This sequence belongs to the amidase family. GatA subfamily. Heterotrimer of A, B and C subunits.

It catalyses the reaction L-glutamyl-tRNA(Gln) + L-glutamine + ATP + H2O = L-glutaminyl-tRNA(Gln) + L-glutamate + ADP + phosphate + H(+). Functionally, allows the formation of correctly charged Gln-tRNA(Gln) through the transamidation of misacylated Glu-tRNA(Gln) in organisms which lack glutaminyl-tRNA synthetase. The reaction takes place in the presence of glutamine and ATP through an activated gamma-phospho-Glu-tRNA(Gln). The chain is Glutamyl-tRNA(Gln) amidotransferase subunit A from Deinococcus geothermalis (strain DSM 11300 / CIP 105573 / AG-3a).